The chain runs to 719 residues: UvrABC system protein B (719 aa).

Residues 49–435 (RRINAGERDV…TGGEFVEQVI (387 aa)) enclose the Helicase ATP-binding domain. Residue 62-69 (GATGTGKS) coordinates ATP. A Beta-hairpin motif is present at residues 115–138 (YYDYYQPEAYIAQTDTYIEKDSSI). Residues 453 to 606 (QIDDLIGEIR…QIAYNEANGI (154 aa)) enclose the Helicase C-terminal domain. The segment at 635–654 (GGSGRNASRGRRAQGEPGRA) is disordered. A UVR domain is found at 674–709 (ADLIKDLTAQMMAAARDLQFELAARFRDEIADLKRE).

This sequence belongs to the UvrB family. Forms a heterotetramer with UvrA during the search for lesions. Interacts with UvrC in an incision complex.

Its subcellular location is the cytoplasm. Functionally, the UvrABC repair system catalyzes the recognition and processing of DNA lesions. A damage recognition complex composed of 2 UvrA and 2 UvrB subunits scans DNA for abnormalities. Upon binding of the UvrA(2)B(2) complex to a putative damaged site, the DNA wraps around one UvrB monomer. DNA wrap is dependent on ATP binding by UvrB and probably causes local melting of the DNA helix, facilitating insertion of UvrB beta-hairpin between the DNA strands. Then UvrB probes one DNA strand for the presence of a lesion. If a lesion is found the UvrA subunits dissociate and the UvrB-DNA preincision complex is formed. This complex is subsequently bound by UvrC and the second UvrB is released. If no lesion is found, the DNA wraps around the other UvrB subunit that will check the other stand for damage. In Mycobacterium tuberculosis (strain CDC 1551 / Oshkosh), this protein is UvrABC system protein B.